The primary structure comprises 381 residues: Succinyl-diaminopimelate desuccinylase (381 aa).

His68 contributes to the Zn(2+) binding site. Asp70 is an active-site residue. Asp101 contributes to the Zn(2+) binding site. The Proton acceptor role is filled by Glu135. Zn(2+) is bound by residues Glu136, Glu164, and His350.

Belongs to the peptidase M20A family. DapE subfamily. In terms of assembly, homodimer. Requires Zn(2+) as cofactor. Co(2+) is required as a cofactor.

The catalysed reaction is N-succinyl-(2S,6S)-2,6-diaminopimelate + H2O = (2S,6S)-2,6-diaminopimelate + succinate. The protein operates within amino-acid biosynthesis; L-lysine biosynthesis via DAP pathway; LL-2,6-diaminopimelate from (S)-tetrahydrodipicolinate (succinylase route): step 3/3. Its function is as follows. Catalyzes the hydrolysis of N-succinyl-L,L-diaminopimelic acid (SDAP), forming succinate and LL-2,6-diaminopimelate (DAP), an intermediate involved in the bacterial biosynthesis of lysine and meso-diaminopimelic acid, an essential component of bacterial cell walls. This is Succinyl-diaminopimelate desuccinylase from Neisseria meningitidis serogroup C (strain 053442).